A 142-amino-acid polypeptide reads, in one-letter code: Acidic phospholipase A2 PA4 (142 aa).

Residues W10, G12, and G14 each contribute to the Ca(2+) site. 3 disulfides stabilise this stretch: C11-C33, C32-C72, and C39-C65. The active site involves H36. D37 serves as a coordination point for Ca(2+).

The protein belongs to the phospholipase A2 family. Group III subfamily. It depends on Ca(2+) as a cofactor. Expressed by the venom gland.

The protein resides in the secreted. It catalyses the reaction a 1,2-diacyl-sn-glycero-3-phosphocholine + H2O = a 1-acyl-sn-glycero-3-phosphocholine + a fatty acid + H(+). In terms of biological role, PLA2 catalyzes the calcium-dependent hydrolysis of the 2-acyl groups in 3-sn-phosphoglycerides. The protein is Acidic phospholipase A2 PA4 of Heloderma suspectum (Gila monster).